The sequence spans 158 residues: Small ribosomal subunit protein uS19 (158 aa).

It belongs to the universal ribosomal protein uS19 family.

Functionally, protein S19 forms a complex with S13 that binds strongly to the 16S ribosomal RNA. The protein is Small ribosomal subunit protein uS19 of Pyrobaculum aerophilum (strain ATCC 51768 / DSM 7523 / JCM 9630 / CIP 104966 / NBRC 100827 / IM2).